We begin with the raw amino-acid sequence, 458 residues long: ATP synthase subunit beta (458 aa).

Residue 148-155 (GGAGVGKT) coordinates ATP.

This sequence belongs to the ATPase alpha/beta chains family. F-type ATPases have 2 components, CF(1) - the catalytic core - and CF(0) - the membrane proton channel. CF(1) has five subunits: alpha(3), beta(3), gamma(1), delta(1), epsilon(1). CF(0) has three main subunits: a(1), b(2) and c(9-12). The alpha and beta chains form an alternating ring which encloses part of the gamma chain. CF(1) is attached to CF(0) by a central stalk formed by the gamma and epsilon chains, while a peripheral stalk is formed by the delta and b chains.

It is found in the cell inner membrane. The catalysed reaction is ATP + H2O + 4 H(+)(in) = ADP + phosphate + 5 H(+)(out). In terms of biological role, produces ATP from ADP in the presence of a proton gradient across the membrane. The catalytic sites are hosted primarily by the beta subunits. The protein is ATP synthase subunit beta of Shewanella halifaxensis (strain HAW-EB4).